Consider the following 155-residue polypeptide: Small ribosomal subunit protein uS10m (155 aa).

The protein belongs to the universal ribosomal protein uS10 family. Component of the mitochondrial ribosome small subunit (28S) which comprises a 12S rRNA and about 30 distinct proteins.

The protein localises to the mitochondrion. The polypeptide is Small ribosomal subunit protein uS10m (Mrps10) (Rattus norvegicus (Rat)).